Consider the following 236-residue polypeptide: 2-C-methyl-D-erythritol 4-phosphate cytidylyltransferase (236 aa).

It belongs to the IspD/TarI cytidylyltransferase family. IspD subfamily.

It carries out the reaction 2-C-methyl-D-erythritol 4-phosphate + CTP + H(+) = 4-CDP-2-C-methyl-D-erythritol + diphosphate. It participates in isoprenoid biosynthesis; isopentenyl diphosphate biosynthesis via DXP pathway; isopentenyl diphosphate from 1-deoxy-D-xylulose 5-phosphate: step 2/6. Catalyzes the formation of 4-diphosphocytidyl-2-C-methyl-D-erythritol from CTP and 2-C-methyl-D-erythritol 4-phosphate (MEP). The sequence is that of 2-C-methyl-D-erythritol 4-phosphate cytidylyltransferase from Symbiobacterium thermophilum (strain DSM 24528 / JCM 14929 / IAM 14863 / T).